The primary structure comprises 253 residues: Sortase SrtE2 (253 aa).

Residues 1–11 (MAATTDTEHQE) are compositionally biased toward basic and acidic residues. A disordered region spans residues 1–23 (MAATTDTEHQEQAGTGGRGRRRP). Residues 30-50 (AVSVLGELLITAGLVMGLFVV) traverse the membrane as a helical segment. Residues 69–89 (EKVRDDWAQDRVGGSGQDGPG) are disordered. The active site involves C220.

Belongs to the bacterial sortase family. Class E subfamily.

It localises to the cell membrane. It carries out the reaction The enzyme catalyzes a cell wall sorting reaction in which a surface protein with a sorting signal containing a LPXTG motif is cleaved between the Thr and Gly residue. The resulting threonine carboxyl end of the protein is covalently attached to a pentaglycine cross-bridge of peptidoglycan.. Transpeptidase that anchors surface proteins to the cell wall. Recognizes Leu-Ala-x-Thr-Gly and Leu-Pro-x-Thr-Gly, with a preference for the former. Unlike the S.aureus sortase it cleaves not only the Thr-Gly motif but also the Ala-X bond; an Ala-Glu bond is a better substrate than the Thr-Gly motif in vitro. Among its possible substrates are the chaplins ChpA, ChpB and ChpC; this enzyme is more important for ChpC attachment than is SrtE1. A double knockout mutant of srtE1 and srtE2 shows a developmental defect in aerial hyphae formation more dramatic than that due to chaplin deletion. This chain is Sortase SrtE2, found in Streptomyces coelicolor (strain ATCC BAA-471 / A3(2) / M145).